A 229-amino-acid chain; its full sequence is UPF0758 protein Fjoh_0413 (229 aa).

Residues 107-229 enclose the MPN domain; sequence KITSSKDAFT…YYSFVDEGIF (123 aa). The Zn(2+) site is built by H178, H180, and D191. The short motif at 178–191 is the JAMM motif element; it reads HNHPSGELNPSQAD.

The protein belongs to the UPF0758 family.

The sequence is that of UPF0758 protein Fjoh_0413 from Flavobacterium johnsoniae (strain ATCC 17061 / DSM 2064 / JCM 8514 / BCRC 14874 / CCUG 350202 / NBRC 14942 / NCIMB 11054 / UW101) (Cytophaga johnsonae).